A 201-amino-acid polypeptide reads, in one-letter code: Pyridoxine/pyridoxamine 5'-phosphate oxidase (201 aa).

FMN-binding positions include 45–50 (RMVLLK), 65–66 (YT), Arg-71, Lys-72, and Gln-94. A substrate-binding site is contributed by Lys-50. Residues Tyr-112, Arg-116, and Ser-120 each coordinate substrate. FMN is bound by residues 129 to 130 (QS) and Trp-174. Residue 180 to 182 (RLH) coordinates substrate. Arg-184 serves as a coordination point for FMN.

This sequence belongs to the pyridoxamine 5'-phosphate oxidase family. As to quaternary structure, homodimer. FMN is required as a cofactor.

It catalyses the reaction pyridoxamine 5'-phosphate + O2 + H2O = pyridoxal 5'-phosphate + H2O2 + NH4(+). The catalysed reaction is pyridoxine 5'-phosphate + O2 = pyridoxal 5'-phosphate + H2O2. It participates in cofactor metabolism; pyridoxal 5'-phosphate salvage; pyridoxal 5'-phosphate from pyridoxamine 5'-phosphate: step 1/1. It functions in the pathway cofactor metabolism; pyridoxal 5'-phosphate salvage; pyridoxal 5'-phosphate from pyridoxine 5'-phosphate: step 1/1. In terms of biological role, catalyzes the oxidation of either pyridoxine 5'-phosphate (PNP) or pyridoxamine 5'-phosphate (PMP) into pyridoxal 5'-phosphate (PLP). The sequence is that of Pyridoxine/pyridoxamine 5'-phosphate oxidase from Rhodospirillum rubrum (strain ATCC 11170 / ATH 1.1.1 / DSM 467 / LMG 4362 / NCIMB 8255 / S1).